The chain runs to 207 residues: Casparian strip membrane protein 1 (207 aa).

A compositionally biased stretch (polar residues) spans 1–12; the sequence is MEGESTAVNITE. Residues 1-24 are disordered; sequence MEGESTAVNITETPKERKGKAPLL. The Cytoplasmic portion of the chain corresponds to 1–48; it reads MEGESTAVNITETPKERKGKAPLLAPPPASGGIKTIVQKAPKGGYKRG. Residues 49 to 69 form a helical membrane-spanning segment; the sequence is LAVFDVVLRIAGIAAALGAVI. Residues 70-98 are Extracellular-facing; the sequence is AMGSTDQTLPFFTQFFQFKAEFDDLPVFT. The chain crosses the membrane as a helical span at residues 99-119; the sequence is FFVIANAITAAYLALSIPISI. At 120–138 the chain is on the cytoplasmic side; sequence VCIIRPHLVGPRVLLTFLD. The helical transmembrane segment at 139–159 threads the bilayer; the sequence is TVMVGLTTAAAGGAASIVYLA. Residues 160–184 lie on the Extracellular side of the membrane; that stretch reads HNGNSDANWPAICQQFNDFCQEVSG. A helical membrane pass occupies residues 185 to 205; it reads AVVASFITVVVLMFLIVLSAF. Over 206–207 the chain is Cytoplasmic; sequence SL.

The protein belongs to the Casparian strip membrane proteins (CASP) family. Homodimer and heterodimers.

Its subcellular location is the cell membrane. Regulates membrane-cell wall junctions and localized cell wall deposition. Required for establishment of the Casparian strip membrane domain (CSD) and the subsequent formation of Casparian strips, a cell wall modification of the root endodermis that determines an apoplastic barrier between the intraorganismal apoplasm and the extraorganismal apoplasm and prevents lateral diffusion. This is Casparian strip membrane protein 1 from Taraxacum kok-saghyz (Russian dandelion).